We begin with the raw amino-acid sequence, 75 residues long: M-myrmeciitoxin-Mp2a (75 aa).

The signal sequence occupies residues 1–26 (MKLSCLLLTLAIIFVLTIVHAPNVEA). Positions 27 to 48 (KALADPESDAVGFADAVGEADP) are excised as a propeptide. The residue at position 74 (Leu74) is a Leucine amide.

Belongs to the formicidae venom precursor-01 superfamily. Ant pilosulin family. Heterodimer with M-MIITX-Mp2b (pilosin-3b) (AC P0C023); disulfide-linked. Only heterodimers (and not monomers) have been identified in the venom. As to expression, expressed by the venom gland.

The protein resides in the secreted. Heterodimer protein that may serve both defensive (pain-inducing) and predatory (insecticidal) roles. Has membrane-disrupting activity and shows induction of non-specific calcium influx into cells,. Shows broad-spectrum activity against a diverse range of bacteria, and cell lines, as well as hemolytic activity (EC(50)=2.18 uM). In vivo, shows moderate insecticidal activity against D.melanogaster and potent anthelmintic activity against the veterinary nematode H.contortus. In addition, intraplantar injection into mice induces nocifensive behavior and mechanical allodynia. The protein is M-myrmeciitoxin-Mp2a of Myrmecia pilosula (Jack jumper ant).